Consider the following 2258-residue polypeptide: Genome polyprotein 1 (2258 aa).

Residues 439 to 597 (SMAQEAKQWS…AVRRYEIKTV (159 aa)) form the Helicase ATP-binding domain. 487–494 (RAATVNVT) provides a ligand contact to ATP. Residues 612–778 (DKENSLYVLQ…GVQFYINEHF (167 aa)) form the Helicase C-terminal domain. Tyr1141 carries the O-(5'-phospho-RNA)-tyrosine modification. The Peptidase C4 domain maps to 1257–1476 (ATLEGMTMKP…TKPRNMQSAP (220 aa)). Catalysis depends on for nuclear inclusion protein A activity residues His1302, Asp1338, and Cys1405. Residues 1745–1869 (WTHGSGDGSR…AMSPSFMVKF (125 aa)) form the RdRp catalytic domain. Disordered regions lie at residues 2027-2047 (NMAA…RGTS) and 2233-2258 (TSEQ…ALLR). Basic and acidic residues predominate over residues 2242–2258 (TETRRRNDYDGHEALLR).

Belongs to the bymoviruses polyprotein 1 family. In terms of processing, VPg is uridylylated by the polymerase and is covalently attached to the 5'-end of the genomic RNA. This uridylylated form acts as a nucleotide-peptide primer for the polymerase. The viral RNA1 of bymoviruses is expressed as a single polyprotein which undergoes post-translational proteolytic processing by the main proteinase NIa-pro resulting in the production of at least eight individual proteins.

The protein localises to the host cytoplasmic vesicle. It is found in the virion. It carries out the reaction RNA(n) + a ribonucleoside 5'-triphosphate = RNA(n+1) + diphosphate. It catalyses the reaction Hydrolyzes glutaminyl bonds, and activity is further restricted by preferences for the amino acids in P6 - P1' that vary with the species of potyvirus, e.g. Glu-Xaa-Xaa-Tyr-Xaa-Gln-|-(Ser or Gly) for the enzyme from tobacco etch virus. The natural substrate is the viral polyprotein, but other proteins and oligopeptides containing the appropriate consensus sequence are also cleaved.. Indispensable for virus replication. In terms of biological role, mediates the cap-independent, EIF4E-dependent translation of viral genomic RNAs. Binds to the cap-binding site of host EIF4E and thus interferes with the host EIF4E-dependent mRNA export and translation. VPg-RNA directly binds EIF4E and is a template for transcription. Also forms trimeric complexes with EIF4E-EIF4G, which are templates for translation. Functionally, has RNA-binding and proteolytic activities. Its function is as follows. An RNA-dependent RNA polymerase that plays an essential role in the virus replication. The polypeptide is Genome polyprotein 1 (Barley mild mosaic virus (strain Na1) (BaMMV)).